Here is a 283-residue protein sequence, read N- to C-terminus: Aquaporin PIP2-5 (283 aa).

A run of 2 helical transmembrane segments spans residues Ala37 to Ile57 and Cys74 to Val94. An NPA 1 motif is present at residues Asn106 to Ala108. The next 3 membrane-spanning stretches (helical) occupy residues Ile125 to Phe145, Gly167 to Ala187, and Val199 to Ile219. The short motif at Asn227–Ala229 is the NPA 2 element. A helical membrane pass occupies residues Ile249–Leu269.

This sequence belongs to the MIP/aquaporin (TC 1.A.8) family. PIP (TC 1.A.8.11) subfamily. Expressed in roots.

It is found in the cell membrane. Functionally, water channel required to facilitate the transport of water across cell membrane. May play a role in root water uptake. The sequence is that of Aquaporin PIP2-5 (PIP2-5) from Oryza sativa subsp. japonica (Rice).